Consider the following 858-residue polypeptide: Taste receptor type 1 member 3 (858 aa).

The signal sequence occupies residues 1-20; the sequence is MPALAIMGLSLAAFLELGMG. Over 21–572 the chain is Extracellular; that stretch reads ASLCLSQQFK…RPKFLAWGEP (552 aa). The N-linked (GlcNAc...) asparagine; when associated with variant T-60 glycan is linked to N58. 9 N-linked (GlcNAc...) asparagine glycosylation sites follow: N85, N130, N203, N264, N379, N387, N418, N439, and N482. Residues 573–593 traverse the membrane as a helical segment; that stretch reads VVLSLLLLLCLVLGLALAALG. The Cytoplasmic portion of the chain corresponds to 594–610; it reads LSVHHWDSPLVQASGGS. Residues 611-631 traverse the membrane as a helical segment; sequence QFCFGLICLGLFCLSVLLFPG. Topologically, residues 632 to 644 are extracellular; the sequence is RPSSASCLAQQPM. A helical transmembrane segment spans residues 645–665; it reads AHLPLTGCLSTLFLQAAETFV. Residues 666–687 are Cytoplasmic-facing; that stretch reads ESELPLSWANWLCSYLRGLWAW. The chain crosses the membrane as a helical span at residues 688–708; the sequence is LVVLLATFVEAALCAWYLIAF. Residues 709-735 lie on the Extracellular side of the membrane; that stretch reads PPEVVTDWSVLPTEVLEHCHVRSWVSL. Residues 736-756 traverse the membrane as a helical segment; sequence GLVHITNAMLAFLCFLGTFLV. The Cytoplasmic portion of the chain corresponds to 757–767; it reads QSQPGRYNRAR. A helical transmembrane segment spans residues 768–788; the sequence is GLTFAMLAYFITWVSFVPLLA. Residues 789–796 lie on the Extracellular side of the membrane; the sequence is NVQVAYQP. The chain crosses the membrane as a helical span at residues 797–817; the sequence is AVQMGAILVCALGILVTFHLP. Residues 818–858 lie on the Cytoplasmic side of the membrane; sequence KCYVLLWLPKLNTQEFFLGRNAKKAADENSGGGEAAQGHNE.

It belongs to the G-protein coupled receptor 3 family. TAS1R subfamily. As to quaternary structure, forms homodimers or heterodimers with TAS1R1 and TAS1R2. Post-translationally, the Thr-60 variant is predicted to introduce a novel N-linked glycosylation site at Asn-58. The addition of even a short carbohydrate group at Asn-58 is predicted to disrupt one of the contact surfaces required for stability of a dimer. Therefore a Thr-60 variant N-glycosylated at Asn-58 is predicted to be precluded from forming homodimers or heterodimers. As to expression, expressed in circumvallate, foliate and fungiform taste papillae as well as in taste buds on the palate. Also expressed in testis. Not expressed in brain, heart, kidney, liver or spleen. The topographic distribution in various taste papillae is different from those of other T1R members.

It localises to the cell membrane. In terms of biological role, putative taste receptor. TAS1R1/TAS1R3 responds to the umami taste stimulus (the taste of monosodium glutamate) and also to most of the 20 standard L-amino acids, but not to their D-enantiomers or other compounds. TAS1R2/TAS1R3 recognizes diverse natural and synthetic sweeteners. TAS1R3 is essential for the recognition and response to the disaccharide trehalose. Sequence differences within and between species can significantly influence the selectivity and specificity of taste responses. This is Taste receptor type 1 member 3 (Tas1r3) from Mus musculus (Mouse).